Reading from the N-terminus, the 575-residue chain is Phosphoenolpyruvate-protein phosphotransferase (575 aa).

Residue tyrosine 122 is modified to Phosphotyrosine. Residue histidine 189 is the Tele-phosphohistidine intermediate of the active site. The phosphoenolpyruvate site is built by arginine 296 and arginine 332. Glutamate 431 and aspartate 455 together coordinate Mg(2+). Residues 454-455 and arginine 465 each bind phosphoenolpyruvate; that span reads ND. The active-site Proton donor is cysteine 502.

The protein belongs to the PEP-utilizing enzyme family. In terms of assembly, homodimer. Interacts with the pole-localizer protein TmaR. Binding to TmaR is reversible as long as TmaR can get phosphorylated, whereas binding to non-phosphorylated TmaR is very strong and shifts the equilibrium toward binding. It depends on Mg(2+) as a cofactor. In terms of processing, phosphorylated on Tyr-122. Phosphorylation on Tyr-122 is important for polar localization but not for interaction with TmaR and for activity.

It localises to the cytoplasm. It catalyses the reaction L-histidyl-[protein] + phosphoenolpyruvate = N(pros)-phospho-L-histidyl-[protein] + pyruvate. Inhibited by oxalate. In terms of biological role, general (non sugar-specific) component of the phosphoenolpyruvate-dependent sugar phosphotransferase system (sugar PTS). This major carbohydrate active-transport system catalyzes the phosphorylation of incoming sugar substrates concomitantly with their translocation across the cell membrane. Enzyme I transfers the phosphoryl group from phosphoenolpyruvate (PEP) to the phosphoryl carrier protein (HPr). Can also use (Z)-3-fluoro-PEP (ZFPEP), (Z)-3-methyl-PEP (ZMePEP), (Z)-3-chloro-PEP (ZClPEP) and (E)-3-chloro-PEP (EClPEP) as alternative phosphoryl donors. The polypeptide is Phosphoenolpyruvate-protein phosphotransferase (Escherichia coli (strain K12)).